The primary structure comprises 716 residues: DNA ligase (716 aa).

NAD(+) contacts are provided by residues 47–51 (DATYD), 96–97 (SL), and Glu130. The active-site N6-AMP-lysine intermediate is Lys132. NAD(+)-binding residues include Arg153, Glu190, Lys306, and Lys330. Zn(2+) contacts are provided by Cys435, Cys438, Cys453, and Cys459. The region spanning 638 to 716 (RSDSAVAGKT…EDEWLKLIEG (79 aa)) is the BRCT domain.

The protein belongs to the NAD-dependent DNA ligase family. LigA subfamily. Mg(2+) is required as a cofactor. The cofactor is Mn(2+).

The catalysed reaction is NAD(+) + (deoxyribonucleotide)n-3'-hydroxyl + 5'-phospho-(deoxyribonucleotide)m = (deoxyribonucleotide)n+m + AMP + beta-nicotinamide D-nucleotide.. In terms of biological role, DNA ligase that catalyzes the formation of phosphodiester linkages between 5'-phosphoryl and 3'-hydroxyl groups in double-stranded DNA using NAD as a coenzyme and as the energy source for the reaction. It is essential for DNA replication and repair of damaged DNA. The polypeptide is DNA ligase (Nitrobacter winogradskyi (strain ATCC 25391 / DSM 10237 / CIP 104748 / NCIMB 11846 / Nb-255)).